A 332-amino-acid polypeptide reads, in one-letter code: Biotin synthase (332 aa).

A Radical SAM core domain is found at 47 to 273 (YYGNKVKLNM…MNPTKEIRIA (227 aa)). 3 residues coordinate [4Fe-4S] cluster: Cys-65, Cys-69, and Cys-72. [2Fe-2S] cluster-binding residues include Cys-109, Cys-141, Cys-201, and Arg-271.

It belongs to the radical SAM superfamily. Biotin synthase family. Homodimer. The cofactor is [4Fe-4S] cluster. [2Fe-2S] cluster serves as cofactor.

The enzyme catalyses (4R,5S)-dethiobiotin + (sulfur carrier)-SH + 2 reduced [2Fe-2S]-[ferredoxin] + 2 S-adenosyl-L-methionine = (sulfur carrier)-H + biotin + 2 5'-deoxyadenosine + 2 L-methionine + 2 oxidized [2Fe-2S]-[ferredoxin]. The protein operates within cofactor biosynthesis; biotin biosynthesis; biotin from 7,8-diaminononanoate: step 2/2. Catalyzes the conversion of dethiobiotin (DTB) to biotin by the insertion of a sulfur atom into dethiobiotin via a radical-based mechanism. This Geobacillus thermodenitrificans (strain NG80-2) protein is Biotin synthase.